The following is a 711-amino-acid chain: DNA ligase (711 aa).

A disordered region spans residues 1 to 21 (MNATHRGAQADASAPAGGLPP). A compositionally biased stretch (low complexity) spans 10 to 21 (ADASAPAGGLPP). Residues 52–56 (DAEYD), 101–102 (SL), and Glu-146 contribute to the NAD(+) site. Lys-148 serves as the catalytic N6-AMP-lysine intermediate. 4 residues coordinate NAD(+): Arg-169, Glu-205, Lys-322, and Lys-346. 4 residues coordinate Zn(2+): Cys-440, Cys-443, Cys-458, and Cys-464. Positions 623–711 (RAPAPLAGKT…VGAGQPGEQS (89 aa)) constitute a BRCT domain.

The protein belongs to the NAD-dependent DNA ligase family. LigA subfamily. It depends on Mg(2+) as a cofactor. Requires Mn(2+) as cofactor.

The catalysed reaction is NAD(+) + (deoxyribonucleotide)n-3'-hydroxyl + 5'-phospho-(deoxyribonucleotide)m = (deoxyribonucleotide)n+m + AMP + beta-nicotinamide D-nucleotide.. DNA ligase that catalyzes the formation of phosphodiester linkages between 5'-phosphoryl and 3'-hydroxyl groups in double-stranded DNA using NAD as a coenzyme and as the energy source for the reaction. It is essential for DNA replication and repair of damaged DNA. The polypeptide is DNA ligase (Cupriavidus pinatubonensis (strain JMP 134 / LMG 1197) (Cupriavidus necator (strain JMP 134))).